A 737-amino-acid polypeptide reads, in one-letter code: MATKFPSFSQGLAQDPTTRRIWYGIATAHDFESHDGMTEERLYQKLFSTHFGHLAIIGLWVSGNLFHIAWQGNFEQWVADPLHVRPIAHAIWDPHFGQGAIDAFTQAGASSPVNIAFSGLYHWWYTIGMRTNAELYQGSIFMMILSAWALFAGWLHLQPKFRPSLAWFKNAESRLNHHLAVLFGFSSIAWTGHLVHVAIPEARGQHVGWDNFLNVLPHPAGLGPFFTGNWGVYAENPDSLNQAFGSADGAGTAILTFLGGFHPQSEALWLTDIAHHHLAIGCIFVIAGHMYRTNFGIGHSIKEILETHNPPKGTPGDLGAGHKGLYDTINNSLHFQLGLALASLGVVTSLVAQHMYSMPSYAFIAKDYTTQAALYTHHQYIAIALMCGAFAHGAIFFIRDYDPEANKDNVLARMLEHKEAIISHLSWVSLFLGFHTLGLYVHNDVVVSFGTPEKQILVEPVFAQFVQAASGKAMYGMDVLLSNASSSASLAAQNIPGDHYWLDAINGNTDVFLPIGPGDFLVHHAIALGLHTTTLILVKGALDARGSKLMPDKKDFGYSFPCDGPGRGGTCDISAWDAFYLAVFWALNTVGWVTFYWHWKHLAIWSGNVAQFNESSTYLMGWFRDYLWLNSSQLINGYNPFGSNNLAVWAWMFLFGHLVWATGFMFLISWRGYWQELIETIVWAHQRSPIANMMGWRDKPVALSIVQARVVGLAHFSVGYVLTYAAFLIASTSGKFG.

8 helical membrane passes run 46–69, 135–158, 175–199, 273–291, 333–356, 372–398, 420–442, and 520–538; these read LFSTHFGHLAIIGLWVSGNLFHIA, LYQGSIFMMILSAWALFAGWLHLQ, LNHHLAVLFGFSSIAWTGHLVHVAI, IAHHHLAIGCIFVIAGHMY, LHFQLGLALASLGVVTSLVAQHMY, AALYTHHQYIAIALMCGAFAHGAIFFI, AIISHLSWVSLFLGFHTLGLYVH, and FLVHHAIALGLHTTTLILV. [4Fe-4S] cluster-binding residues include C562 and C571. 2 helical membrane-spanning segments follow: residues 578–599 and 646–668; these read AFYLAVFWALNTVGWVTFYWHW and LAVWAWMFLFGHLVWATGFMFLI. Residues H657, M665, and Y673 each coordinate chlorophyll a. W674 contacts phylloquinone. Residues 710–730 form a helical membrane-spanning segment; the sequence is VVGLAHFSVGYVLTYAAFLIA.

This sequence belongs to the PsaA/PsaB family. In terms of assembly, the PsaA/B heterodimer binds the P700 chlorophyll special pair and subsequent electron acceptors. PSI consists of a core antenna complex that captures photons, and an electron transfer chain that converts photonic excitation into a charge separation. The cyanobacterial PSI reaction center is composed of one copy each of PsaA,B,C,D,E,F,I,J,K,L,M and X, and forms trimeric complexes. PSI electron transfer chain: 5 chlorophyll a, 1 chlorophyll a', 2 phylloquinones and 3 4Fe-4S clusters. PSI core antenna: 90 chlorophyll a, 22 carotenoids, 3 phospholipids and 1 galactolipid. P700 is a chlorophyll a/chlorophyll a' dimer, A0 is one or more chlorophyll a, A1 is one or both phylloquinones and FX is a shared 4Fe-4S iron-sulfur center. serves as cofactor.

The protein localises to the cellular thylakoid membrane. The catalysed reaction is reduced [plastocyanin] + hnu + oxidized [2Fe-2S]-[ferredoxin] = oxidized [plastocyanin] + reduced [2Fe-2S]-[ferredoxin]. PsaA and PsaB bind P700, the primary electron donor of photosystem I (PSI), as well as the electron acceptors A0, A1 and FX. PSI is a plastocyanin/cytochrome c6-ferredoxin oxidoreductase, converting photonic excitation into a charge separation, which transfers an electron from the donor P700 chlorophyll pair to the spectroscopically characterized acceptors A0, A1, FX, FA and FB in turn. Oxidized P700 is reduced on the lumenal side of the thylakoid membrane by plastocyanin or cytochrome c6. This Parasynechococcus marenigrum (strain WH8102) protein is Photosystem I P700 chlorophyll a apoprotein A2.